A 383-amino-acid polypeptide reads, in one-letter code: 1-deoxy-D-xylulose 5-phosphate reductoisomerase (383 aa).

Positions 10, 11, 12, 13, 36, 37, 38, and 122 each coordinate NADPH. Residue Lys123 coordinates 1-deoxy-D-xylulose 5-phosphate. Glu124 serves as a coordination point for NADPH. Asp148 contributes to the Mn(2+) binding site. 1-deoxy-D-xylulose 5-phosphate contacts are provided by Ser149, Glu150, Ser174, and His197. Glu150 contacts Mn(2+). Residue Gly203 coordinates NADPH. Residues Ser210, Asn215, Lys216, and Glu219 each contribute to the 1-deoxy-D-xylulose 5-phosphate site. Residue Glu219 coordinates Mn(2+).

It belongs to the DXR family. Mg(2+) is required as a cofactor. It depends on Mn(2+) as a cofactor.

It catalyses the reaction 2-C-methyl-D-erythritol 4-phosphate + NADP(+) = 1-deoxy-D-xylulose 5-phosphate + NADPH + H(+). It functions in the pathway isoprenoid biosynthesis; isopentenyl diphosphate biosynthesis via DXP pathway; isopentenyl diphosphate from 1-deoxy-D-xylulose 5-phosphate: step 1/6. Catalyzes the NADPH-dependent rearrangement and reduction of 1-deoxy-D-xylulose-5-phosphate (DXP) to 2-C-methyl-D-erythritol 4-phosphate (MEP). This is 1-deoxy-D-xylulose 5-phosphate reductoisomerase from Bacillus subtilis (strain 168).